The primary structure comprises 310 residues: Glycerol-3-phosphate dehydrogenase [NAD(P)+] (310 aa).

The NADPH site is built by Trp-19, Arg-39, Arg-40, and Lys-87. Positions 87 and 115 each coordinate sn-glycerol 3-phosphate. Ser-119 contacts NADPH. Sn-glycerol 3-phosphate contacts are provided by Lys-170, Asp-223, Ser-233, Arg-234, and Asn-235. The active-site Proton acceptor is Lys-170. Arg-234 is an NADPH binding site. An NADPH-binding site is contributed by Glu-260.

The protein belongs to the NAD-dependent glycerol-3-phosphate dehydrogenase family.

The protein resides in the cytoplasm. The catalysed reaction is sn-glycerol 3-phosphate + NAD(+) = dihydroxyacetone phosphate + NADH + H(+). It carries out the reaction sn-glycerol 3-phosphate + NADP(+) = dihydroxyacetone phosphate + NADPH + H(+). It participates in membrane lipid metabolism; glycerophospholipid metabolism. In terms of biological role, catalyzes the reduction of the glycolytic intermediate dihydroxyacetone phosphate (DHAP) to sn-glycerol 3-phosphate (G3P), the key precursor for phospholipid synthesis. This is Glycerol-3-phosphate dehydrogenase [NAD(P)+] from Synechococcus sp. (strain JA-3-3Ab) (Cyanobacteria bacterium Yellowstone A-Prime).